The chain runs to 761 residues: Semaphorin-3D (761 aa).

The first 24 residues, 1 to 24 (MRASQVPNACSLLSLAMLFFPVTG), serve as a signal peptide directing secretion. A Sema domain is found at 32–519 (RLKLSYKDLL…SRDGLVQLSL (488 aa)). A disulfide bridge links cysteine 105 with cysteine 116. Asparagine 127 carries an N-linked (GlcNAc...) asparagine glycan. 4 cysteine pairs are disulfide-bonded: cysteine 134–cysteine 143, cysteine 274–cysteine 386, cysteine 298–cysteine 346, and cysteine 522–cysteine 540. Positions 552–670 (PTSKRRARRQ…IHTIVKLNLN (119 aa)) constitute an Ig-like C2-type domain. Asparagine 595 carries an N-linked (GlcNAc...) asparagine glycan. Cysteine 653 and cysteine 719 form a disulfide bridge. The segment covering 728-754 (RRQRNKGGAKWKHVQEMKKKRNRRHHE) has biased composition (basic residues). Residues 728 to 761 (RRQRNKGGAKWKHVQEMKKKRNRRHHEPARPPST) form a disordered region.

It belongs to the semaphorin family. In terms of tissue distribution, developing spinal cord and developing visual system. Collapsin-1, -2, -3, and -5 bind to overlapping but distinct axon tracts.

It localises to the secreted. In terms of biological role, induces the collapse and paralysis of neuronal growth cones. Could potentially act as repulsive cues toward specific neuronal populations. Binds to neuropilin. The chain is Semaphorin-3D (SEMA3D) from Gallus gallus (Chicken).